Reading from the N-terminus, the 337-residue chain is Sideroflexin-4 (337 aa).

Ser2 is modified (N-acetylserine). A run of 3 helical transmembrane segments spans residues 111 to 131 (AAFL…LKGI), 133 to 153 (SVIL…SING), and 165 to 185 (SLLM…PQFV). Position 197 is an N6-acetyllysine (Lys197). The next 2 helical transmembrane spans lie at 251–271 (ASRI…TYFF) and 293–313 (VLAM…IGQI).

Belongs to the sideroflexin family.

The protein localises to the mitochondrion inner membrane. Mitochondrial amino-acid transporter. Does not act as a serine transporter: not able to mediate transport of serine into mitochondria. This chain is Sideroflexin-4, found in Homo sapiens (Human).